The primary structure comprises 93 residues: HssA/B-like protein 26 (93 aa).

The protein belongs to the hssA/B family.

The chain is HssA/B-like protein 26 (hssl26) from Dictyostelium discoideum (Social amoeba).